Reading from the N-terminus, the 596-residue chain is Leucine-rich repeat and IQ domain-containing protein 4 (596 aa).

LRR repeat units lie at residues 22 to 44 (LPRL…LLRQ), 59 to 83 (LTDR…ILAL), 84 to 106 (KELE…IQQL), 108 to 129 (NTKV…LGAL), 130 to 152 (SSLE…VVSR), 153 to 176 (LRTL…ICKS), 177 to 200 (LHHL…IVNQ), 202 to 223 (KLRE…LCVL), 224 to 246 (YNLE…IGHL), 248 to 269 (RLQK…LSQC), 270 to 293 (SKLS…ELLT), 295 to 315 (LTEV…LCSW), 317 to 337 (SLHL…SFKR), 338 to 361 (LINL…ICAL), 362 to 384 (KNLE…ISLL), 385 to 407 (SNLK…IFSL), 410 to 433 (LEKL…IKRL), 434 to 457 (MNLK…GLMP), 459 to 479 (LEVL…ICRT), 480 to 502 (RNLR…LDHL), 504 to 525 (NLKV…VCNQ), and 527 to 549 (NEAI…TIQA). Residues 540 to 569 (RKMMATTIQAWWRGIMVRKGYGSYEELLKA) enclose the IQ domain. Residues 569 to 587 (ARKKGKSPPKDKKGKKAAK) show a composition bias toward basic residues. Positions 569 to 596 (ARKKGKSPPKDKKGKKAAKGKPEKGNKK) are disordered.

This chain is Leucine-rich repeat and IQ domain-containing protein 4 (Lrriq4), found in Mus musculus (Mouse).